The primary structure comprises 210 residues: Uracil phosphoribosyltransferase (210 aa).

Residues Arg-78, Arg-103, and 130-138 (DPMLATGGS) contribute to the 5-phospho-alpha-D-ribose 1-diphosphate site. Residues Ile-195 and 200–202 (GDA) each bind uracil. 5-phospho-alpha-D-ribose 1-diphosphate is bound at residue Asp-201.

It belongs to the UPRTase family. Requires Mg(2+) as cofactor.

The enzyme catalyses UMP + diphosphate = 5-phospho-alpha-D-ribose 1-diphosphate + uracil. Its pathway is pyrimidine metabolism; UMP biosynthesis via salvage pathway; UMP from uracil: step 1/1. Its activity is regulated as follows. Allosterically activated by GTP. In terms of biological role, catalyzes the conversion of uracil and 5-phospho-alpha-D-ribose 1-diphosphate (PRPP) to UMP and diphosphate. The polypeptide is Uracil phosphoribosyltransferase (Leifsonia xyli subsp. xyli (strain CTCB07)).